The sequence spans 354 residues: tRNase Z TRZ2, chloroplastic (354 aa).

The disordered stretch occupies residues 1–21 (MQLSSSFPISPPKIFPSTKHH). Residues 1 to 68 (MQLSSSFPIS…EEEEEYRKAR (68 aa)) constitute a chloroplast transit peptide.

The protein belongs to the RNase Z family. In terms of assembly, homodimer. Zn(2+) serves as cofactor. The cofactor is Ca(2+). Mn(2+) is required as a cofactor. It depends on Mg(2+) as a cofactor. Highly expressed in green and actively dividing tissues.

It localises to the plastid. It is found in the chloroplast. The catalysed reaction is Endonucleolytic cleavage of RNA, removing extra 3' nucleotides from tRNA precursor, generating 3' termini of tRNAs. A 3'-hydroxy group is left at the tRNA terminus and a 5'-phosphoryl group is left at the trailer molecule.. Functionally, zinc phosphodiesterase, which displays tRNA 3'-processing endonuclease activity. Involved in tRNA maturation, by removing a 3'-trailer from precursor tRNA. The protein is tRNase Z TRZ2, chloroplastic of Arabidopsis thaliana (Mouse-ear cress).